We begin with the raw amino-acid sequence, 502 residues long: ATP synthase subunit alpha (502 aa).

169-176 (GDRATGKT) serves as a coordination point for ATP.

This sequence belongs to the ATPase alpha/beta chains family. F-type ATPases have 2 components, CF(1) - the catalytic core - and CF(0) - the membrane proton channel. CF(1) has five subunits: alpha(3), beta(3), gamma(1), delta(1), epsilon(1). CF(0) has three main subunits: a(1), b(2) and c(9-12). The alpha and beta chains form an alternating ring which encloses part of the gamma chain. CF(1) is attached to CF(0) by a central stalk formed by the gamma and epsilon chains, while a peripheral stalk is formed by the delta and b chains.

It localises to the cell inner membrane. The catalysed reaction is ATP + H2O + 4 H(+)(in) = ADP + phosphate + 5 H(+)(out). Produces ATP from ADP in the presence of a proton gradient across the membrane. The alpha chain is a regulatory subunit. The chain is ATP synthase subunit alpha from Hydrogenobaculum sp. (strain Y04AAS1).